Here is an 892-residue protein sequence, read N- to C-terminus: Translation initiation factor IF-2 (892 aa).

The disordered stretch occupies residues 65–296; it reads KTRSTLNIPS…KGKRKPSTLQ (232 aa). The segment covering 68-82 has biased composition (polar residues); sequence STLNIPSTGGKSKSV. Basic and acidic residues predominate over residues 99 to 217; sequence EQAKAEEQAQ…KMAAENEGKW (119 aa). Over residues 224-237 the composition is skewed to polar residues; that stretch reads QTESADYHVTTSQH. Positions 239-254 are enriched in basic and acidic residues; it reads RAAEDENDAKVEGDRR. The span at 255–269 shows a compositional bias: basic residues; it reads SRTRGGKATKQKKGN. Basic and acidic residues predominate over residues 270–283; it reads KLSESKADREEARA. The tr-type G domain maps to 391–560; the sequence is HRAPVVTIMG…LLQAEVLELK (170 aa). A G1 region spans residues 400-407; it reads GHVDHGKT. 400-407 lines the GTP pocket; that stretch reads GHVDHGKT. A G2 region spans residues 425 to 429; the sequence is GITQH. The tract at residues 446-449 is G3; sequence DTPG. Residues 446 to 450 and 500 to 503 each bind GTP; these read DTPGH and NKID. Positions 500–503 are G4; the sequence is NKID. Residues 536 to 538 form a G5 region; sequence SAK.

The protein belongs to the TRAFAC class translation factor GTPase superfamily. Classic translation factor GTPase family. IF-2 subfamily.

Its subcellular location is the cytoplasm. Functionally, one of the essential components for the initiation of protein synthesis. Protects formylmethionyl-tRNA from spontaneous hydrolysis and promotes its binding to the 30S ribosomal subunits. Also involved in the hydrolysis of GTP during the formation of the 70S ribosomal complex. This Yersinia pseudotuberculosis serotype O:1b (strain IP 31758) protein is Translation initiation factor IF-2.